Reading from the N-terminus, the 316-residue chain is Protoheme IX farnesyltransferase (316 aa).

9 consecutive transmembrane segments (helical) span residues 32–52 (VMSL…GHIN), 53–73 (PVLG…SGAL), 93–113 (IPAG…LSGF), 116–136 (VILG…TIFF), 152–172 (NIVI…ACVT), 180–200 (TVLF…LALF), 221–241 (VTKH…VLPS), 252–271 (LVAA…VWRM), and 289–309 (IFYL…AILV).

The protein belongs to the UbiA prenyltransferase family. Protoheme IX farnesyltransferase subfamily.

It localises to the cell inner membrane. It catalyses the reaction heme b + (2E,6E)-farnesyl diphosphate + H2O = Fe(II)-heme o + diphosphate. It participates in porphyrin-containing compound metabolism; heme O biosynthesis; heme O from protoheme: step 1/1. Functionally, converts heme B (protoheme IX) to heme O by substitution of the vinyl group on carbon 2 of heme B porphyrin ring with a hydroxyethyl farnesyl side group. The polypeptide is Protoheme IX farnesyltransferase (Rhizobium etli (strain ATCC 51251 / DSM 11541 / JCM 21823 / NBRC 15573 / CFN 42)).